We begin with the raw amino-acid sequence, 201 residues long: Large ribosomal subunit protein uL4 (201 aa).

Positions 45–66 (AQKSRAEVVGSNKKPWRQKGTG) are disordered.

Belongs to the universal ribosomal protein uL4 family. As to quaternary structure, part of the 50S ribosomal subunit.

One of the primary rRNA binding proteins, this protein initially binds near the 5'-end of the 23S rRNA. It is important during the early stages of 50S assembly. It makes multiple contacts with different domains of the 23S rRNA in the assembled 50S subunit and ribosome. In terms of biological role, forms part of the polypeptide exit tunnel. The sequence is that of Large ribosomal subunit protein uL4 from Baumannia cicadellinicola subsp. Homalodisca coagulata.